The following is a 310-amino-acid chain: Ribosomal RNA small subunit methyltransferase H (310 aa).

S-adenosyl-L-methionine contacts are provided by residues 33–35 (GGH), Asp52, Phe79, Asp98, and Gln105.

Belongs to the methyltransferase superfamily. RsmH family.

It localises to the cytoplasm. It catalyses the reaction cytidine(1402) in 16S rRNA + S-adenosyl-L-methionine = N(4)-methylcytidine(1402) in 16S rRNA + S-adenosyl-L-homocysteine + H(+). Functionally, specifically methylates the N4 position of cytidine in position 1402 (C1402) of 16S rRNA. The polypeptide is Ribosomal RNA small subunit methyltransferase H (Campylobacter jejuni (strain RM1221)).